A 596-amino-acid polypeptide reads, in one-letter code: MISSLNPLFTTHRSGVIAQQFFASSAAASINSVSSLKIAACSKTKLVDQSPLRQSGNHQLLSSDFNHLQSLKNDYAEEKYKSRCEVLKEQVKMMLDQEMDVVNQLELIDDLQRLGLSYHFGDEITSVLSGIYNRKSMNKMRNQWGLYATCLEFRLLRQHGFDVSQEIFDCFKDEKGDFRPSLCEDSKGMLYLYEASYLESENEESNLEMARRFAAKTLKKNLDEKRVDQDLVALVQHALELPLHWRMMRLEARWFIDIYEERSNRNPILLELAKLDFNIVQAAHQNDLTYTLRWWRSTCLAEKLTFARDMMVENFFWTVGIISDPQRGNGRRILTKVVALITAIDDIYDCYGTLDELEVFTTAVERWDVNSIDQLPDCMKICFLALYNFVNEMAYDALKEQGVNIIPYLRKSWADLCKAYLQEAKWFFSGEVPTLQQYLNNAWISISAPAFLVHAYFCVDYPINKDHLQYLDNYHKIIRCSAMILRLTNDLGTSPESEVLNVGDVPKSIRCYMKETGACEEKAREHLRFLITEAWKQMEEAQTLDSPFSSTFNGIAVNLARMGLCMYQHGDGHGHQNSEPRDRILSLLFEPICCLA.

Residues Met-1–Ala-39 constitute a chloroplast transit peptide. The (2E)-geranyl diphosphate site is built by Arg-308, Asp-345, Asp-349, Arg-486, and Asn-489. The Mg(2+) site is built by Asp-345 and Asp-349. Positions Asp-345–Asp-349 match the DDXXD motif motif. Residues Asn-489, Thr-493, and Ser-497 each contribute to the Mg(2+) site.

The protein belongs to the terpene synthase family. Tpsb subfamily. In terms of assembly, monomer. The cofactor is Mg(2+). Mn(2+) serves as cofactor. As to expression, expressed in flowers and fruits.

Its subcellular location is the plastid. The protein resides in the chloroplast. The enzyme catalyses (2E)-geranyl diphosphate = beta-myrcene + diphosphate. The catalysed reaction is (2E)-geranyl diphosphate + H2O = linalool + diphosphate. It catalyses the reaction (2E)-geranyl diphosphate = (Z)-beta-ocimene + diphosphate. It carries out the reaction (2E)-geranyl diphosphate = (E)-beta-ocimene + diphosphate. It functions in the pathway secondary metabolite biosynthesis; terpenoid biosynthesis. Monoterpene synthase (mono-TPS) involved in the biosynthesis of monoterpenes natural products, constituent of coffee beverage aroma. Catalyzes the conversion of (2E)-geranyl diphosphate (GPP) into linalool and beta-myrcene, and, as minor products, cis-ocimene and trans-ocimene. Not able to use geranylgeranyl pyrophosphate (GGPP) and farnesyl pyrophosphate (FPP) as substrates. This chain is Linalool synthase TPS3, chloroplastic, found in Coffea arabica (Arabian coffee).